Reading from the N-terminus, the 387-residue chain is ATP phosphoribosyltransferase regulatory subunit (387 aa).

Belongs to the class-II aminoacyl-tRNA synthetase family. HisZ subfamily. Heteromultimer composed of HisG and HisZ subunits.

Its subcellular location is the cytoplasm. It participates in amino-acid biosynthesis; L-histidine biosynthesis; L-histidine from 5-phospho-alpha-D-ribose 1-diphosphate: step 1/9. Required for the first step of histidine biosynthesis. May allow the feedback regulation of ATP phosphoribosyltransferase activity by histidine. The sequence is that of ATP phosphoribosyltransferase regulatory subunit from Polynucleobacter necessarius subsp. necessarius (strain STIR1).